Consider the following 677-residue polypeptide: Protein hook (677 aa).

The Calponin-homology (CH) domain occupies 6–123 (NEMYYSLLEW…RLLQLVLGCA (118 aa)). 2 coiled-coil regions span residues 135–436 (EIMC…KCGH) and 478–588 (QTAL…AKEV).

The protein belongs to the hook family. As to quaternary structure, homodimer. Interacts with microtubules via its N-terminus.

It localises to the cytoplasm. Its subcellular location is the cytoskeleton. The protein localises to the endosome. The protein resides in the synapse. Functionally, involved in endocytic trafficking by stabilizing organelles of the endocytic pathway. Probably acts as a cytoskeletal linker protein required to tether endosome vesicles to the cytoskeleton. Involved in modulation of endocytosis at stages required for down-regulation of membrane proteins that control synapse size. Not involved in synaptic vesicle recycling. Required in R7 cells for boss endocytosis into multivesicular bodies (MVBs). Has a role in regulating adult longevity. The protein is Protein hook of Drosophila pseudoobscura pseudoobscura (Fruit fly).